The chain runs to 215 residues: Large ribosomal subunit protein uL1 (215 aa).

It belongs to the universal ribosomal protein uL1 family. Part of the 50S ribosomal subunit.

Binds directly to 23S rRNA. Probably involved in E site tRNA release. Functionally, protein L1 is also a translational repressor protein, it controls the translation of its operon by binding to its mRNA. The chain is Large ribosomal subunit protein uL1 from Staphylothermus marinus (strain ATCC 43588 / DSM 3639 / JCM 9404 / F1).